We begin with the raw amino-acid sequence, 313 residues long: Probable GTP 3',8-cyclase (313 aa).

The 221-residue stretch at 4–224 folds into the Radical SAM core domain; sequence RFGRSIEDLR…EIRSKHYRPR (221 aa). Residue Arg13 coordinates GTP. Positions 20, 24, and 27 each coordinate [4Fe-4S] cluster. Residue Lys60 coordinates GTP. Gly64 is an S-adenosyl-L-methionine binding site. Thr90 contacts GTP. Ser114 contacts S-adenosyl-L-methionine. Residue Lys151 coordinates GTP. [4Fe-4S] cluster is bound by residues Cys244 and Cys247. 249-251 contacts GTP; sequence RIR. Cys261 lines the [4Fe-4S] cluster pocket.

Belongs to the radical SAM superfamily. MoaA family. Requires [4Fe-4S] cluster as cofactor.

It catalyses the reaction GTP + AH2 + S-adenosyl-L-methionine = (8S)-3',8-cyclo-7,8-dihydroguanosine 5'-triphosphate + 5'-deoxyadenosine + L-methionine + A + H(+). It participates in cofactor biosynthesis; molybdopterin biosynthesis. Functionally, catalyzes the cyclization of GTP to (8S)-3',8-cyclo-7,8-dihydroguanosine 5'-triphosphate. In Sulfurisphaera tokodaii (strain DSM 16993 / JCM 10545 / NBRC 100140 / 7) (Sulfolobus tokodaii), this protein is Probable GTP 3',8-cyclase.